The following is a 136-amino-acid chain: UPF0213 protein AHA_3736 (136 aa).

Residues 17–92 (SHWFIYMVRT…KQQSKAFKEQ (76 aa)) form the GIY-YIG domain. The segment at 114–136 (QKRPRYAAAKEGSDNRECQRQVD) is disordered. Over residues 124-136 (EGSDNRECQRQVD) the composition is skewed to basic and acidic residues.

It belongs to the UPF0213 family.

In Aeromonas hydrophila subsp. hydrophila (strain ATCC 7966 / DSM 30187 / BCRC 13018 / CCUG 14551 / JCM 1027 / KCTC 2358 / NCIMB 9240 / NCTC 8049), this protein is UPF0213 protein AHA_3736.